Reading from the N-terminus, the 133-residue chain is p53 and DNA damage-regulated protein 1 (133 aa).

The protein belongs to the prefoldin subunit beta family. Component of the PAQosome complex which is responsible for the biogenesis of several protein complexes and which consists of R2TP complex members RUVBL1, RUVBL2, RPAP3 and PIH1D1, URI complex members PFDN2, PFDN6, PDRG1, UXT and URI1 as well as ASDURF, POLR2E and DNAAF10/WDR92. Predominantly expressed in normal testis and exhibits reduced but detectable expression in other organs.

Its subcellular location is the cytoplasm. May play a role in chaperone-mediated protein folding. The protein is p53 and DNA damage-regulated protein 1 (PDRG1) of Homo sapiens (Human).